Reading from the N-terminus, the 637-residue chain is Biosynthetic arginine decarboxylase (637 aa).

The residue at position 110 (Lys110) is an N6-(pyridoxal phosphate)lysine. Position 290–300 (290–300) interacts with substrate; the sequence is IDVGGGLGVDY.

Belongs to the Orn/Lys/Arg decarboxylase class-II family. SpeA subfamily. The cofactor is Mg(2+). Pyridoxal 5'-phosphate is required as a cofactor.

It catalyses the reaction L-arginine + H(+) = agmatine + CO2. Its function is as follows. Catalyzes the biosynthesis of agmatine from arginine. This chain is Biosynthetic arginine decarboxylase, found in Pseudomonas putida (strain ATCC 47054 / DSM 6125 / CFBP 8728 / NCIMB 11950 / KT2440).